We begin with the raw amino-acid sequence, 626 residues long: Probable metalloendopeptidase G1-type (626 aa).

His-42 provides a ligand contact to Zn(2+). Glu-45 is an active-site residue. A Zn(2+)-binding site is contributed by His-46.

Belongs to the peptidase M44 family. Zn(2+) serves as cofactor.

Functionally, seems to be involved in viral proteins maturation by cleavage at Ala-Gly-|-Xaa motifs. This is Probable metalloendopeptidase G1-type from Fowlpox virus (strain NVSL) (FPV).